Here is a 56-residue protein sequence, read N- to C-terminus: Hydrophobic protein LTI6A (56 aa).

2 helical membrane-spanning segments follow: residues 11 to 31 (IILA…CGIE) and 34 to 54 (ICLL…VWVI).

The protein belongs to the UPF0057 (PMP3) family. As to expression, expressed in shoot of cold stressed seedlings.

The protein resides in the membrane. In terms of biological role, plays a role in the regulation of membrane potential. Could mediate a proton leak. This Oryza sativa subsp. japonica (Rice) protein is Hydrophobic protein LTI6A (LTI6A).